Consider the following 212-residue polypeptide: Imidazole glycerol phosphate synthase subunit HisH 2 (212 aa).

One can recognise a Glutamine amidotransferase type-1 domain in the interval 3-212; the sequence is RVAIIDYGIN…LMSNFLQWNP (210 aa). C82 acts as the Nucleophile in catalysis. Active-site residues include H192 and E194.

Heterodimer of HisH and HisF.

It localises to the cytoplasm. It carries out the reaction 5-[(5-phospho-1-deoxy-D-ribulos-1-ylimino)methylamino]-1-(5-phospho-beta-D-ribosyl)imidazole-4-carboxamide + L-glutamine = D-erythro-1-(imidazol-4-yl)glycerol 3-phosphate + 5-amino-1-(5-phospho-beta-D-ribosyl)imidazole-4-carboxamide + L-glutamate + H(+). It catalyses the reaction L-glutamine + H2O = L-glutamate + NH4(+). It functions in the pathway amino-acid biosynthesis; L-histidine biosynthesis; L-histidine from 5-phospho-alpha-D-ribose 1-diphosphate: step 5/9. IGPS catalyzes the conversion of PRFAR and glutamine to IGP, AICAR and glutamate. The HisH subunit provides the glutamine amidotransferase activity that produces the ammonia necessary to HisF for the synthesis of IGP and AICAR. This chain is Imidazole glycerol phosphate synthase subunit HisH 2, found in Nitrobacter winogradskyi (strain ATCC 25391 / DSM 10237 / CIP 104748 / NCIMB 11846 / Nb-255).